A 485-amino-acid polypeptide reads, in one-letter code: Membrane-bound lytic murein transglycosylase F (485 aa).

A signal peptide spans 1–29 (MFAHTALRQRCAKWLFATGLFLLLGACVE). The non-LT domain stretch occupies residues 30–267 (KPSTLERVKE…RLKDRYYGHV (238 aa)). Residues 268 to 485 (DVLGYVGAYT…DKPAEQSPPM (218 aa)) form an LT domain region. Residue E314 is part of the active site. A disordered region spans residues 465 to 485 (EGNLHVPGVNKDKPAEQSPPM).

The protein in the N-terminal section; belongs to the bacterial solute-binding protein 3 family. In the C-terminal section; belongs to the transglycosylase Slt family.

It is found in the cell outer membrane. The enzyme catalyses Exolytic cleavage of the (1-&gt;4)-beta-glycosidic linkage between N-acetylmuramic acid (MurNAc) and N-acetylglucosamine (GlcNAc) residues in peptidoglycan, from either the reducing or the non-reducing ends of the peptidoglycan chains, with concomitant formation of a 1,6-anhydrobond in the MurNAc residue.. Functionally, murein-degrading enzyme that degrades murein glycan strands and insoluble, high-molecular weight murein sacculi, with the concomitant formation of a 1,6-anhydromuramoyl product. Lytic transglycosylases (LTs) play an integral role in the metabolism of the peptidoglycan (PG) sacculus. Their lytic action creates space within the PG sacculus to allow for its expansion as well as for the insertion of various structures such as secretion systems and flagella. The protein is Membrane-bound lytic murein transglycosylase F of Pseudomonas putida (strain W619).